A 262-amino-acid chain; its full sequence is Encapsulin nanocompartment protein Rv1762c (262 aa).

The protein belongs to the UPF0145 family.

Its subcellular location is the encapsulin nanocompartment. In terms of biological role, cargo protein of a type 1 encapsulin nanocompartment possibly involved in protection against oxidative stress. This chain is Encapsulin nanocompartment protein Rv1762c, found in Mycobacterium tuberculosis (strain ATCC 25618 / H37Rv).